We begin with the raw amino-acid sequence, 244 residues long: DNA polymerase sliding clamp (244 aa).

Belongs to the PCNA family. Homotrimer. The subunits circularize to form a toroid; DNA passes through its center. Replication factor C (RFC) is required to load the toroid on the DNA.

Sliding clamp subunit that acts as a moving platform for DNA processing. Responsible for tethering the catalytic subunit of DNA polymerase to DNA during high-speed replication. In conjunction with replication factor C (RFC) stimulates DNA synthesis by PolB, relieving inhibition by replication protein A (RPA). This Methanothermobacter thermautotrophicus (strain ATCC 29096 / DSM 1053 / JCM 10044 / NBRC 100330 / Delta H) (Methanobacterium thermoautotrophicum) protein is DNA polymerase sliding clamp.